The chain runs to 515 residues: Fatty acyl-CoA reductase 2 (515 aa).

Residues 1–464 (MSMIAAFYSN…KAKQHLRRLR (464 aa)) are Cytoplasmic-facing. A helical transmembrane segment spans residues 465–484 (NIHYLFNTALFLIIWRLLIA). Over 485 to 515 (RSQMARNVWFFIVSFCYKFISYFRASSTLKV) the chain is Peroxisomal.

The protein belongs to the fatty acyl-CoA reductase family. As to expression, specifically expressed in the meibomian glands of the eyelid and the sebaceous glands of the skin. Also expressed in the brain where large quantities of ether lipids are synthesized.

It localises to the peroxisome membrane. The catalysed reaction is a long-chain fatty acyl-CoA + 2 NADPH + 2 H(+) = a long-chain primary fatty alcohol + 2 NADP(+) + CoA. The enzyme catalyses hexadecanoyl-CoA + 2 NADPH + 2 H(+) = hexadecan-1-ol + 2 NADP(+) + CoA. It carries out the reaction octadecanoyl-CoA + 2 NADPH + 2 H(+) = octadecan-1-ol + 2 NADP(+) + CoA. It catalyses the reaction a very long-chain fatty acyl-CoA + 2 NADPH + 2 H(+) = a very long-chain primary fatty alcohol + 2 NADP(+) + CoA. The catalysed reaction is an ultra-long-chain fatty acyl-CoA + 2 NADPH + 2 H(+) = an ultra long-chain primary fatty alcohol + 2 NADP(+) + CoA. The enzyme catalyses eicosanoyl-CoA + 2 NADPH + 2 H(+) = eicosan-1-ol + 2 NADP(+) + CoA. It carries out the reaction docosanoyl-CoA + 2 NADPH + 2 H(+) = docosan-1-ol + 2 NADP(+) + CoA. It catalyses the reaction tetracosanoyl-CoA + 2 NADPH + 2 H(+) = tetracosan-1-ol + 2 NADP(+) + CoA. The catalysed reaction is hexacosanoyl-CoA + 2 NADPH + 2 H(+) = hexacosan-1-ol + 2 NADP(+) + CoA. The enzyme catalyses octacosanoyl-CoA + 2 NADPH + 2 H(+) = octacosan-1-ol + 2 NADP(+) + CoA. It carries out the reaction triacontanoyl-CoA + 2 NADPH + 2 H(+) = triacontan-1-ol + 2 NADP(+) + CoA. It catalyses the reaction 18-methylnonadecanoyl-CoA + 2 NADPH + 2 H(+) = 18-methylnonadecan-1-ol + 2 NADP(+) + CoA. The catalysed reaction is 20-methylheneicosanoyl-CoA + 2 NADPH + 2 H(+) = 20-methylheneicosan-1-ol + 2 NADP(+) + CoA. The enzyme catalyses 22-methyltricosanoyl-CoA + 2 NADPH + 2 H(+) = 22-methyltricosan-1-ol + 2 NADP(+) + CoA. It carries out the reaction 24-methylpentacosanoyl-CoA + 2 NADPH + 2 H(+) = 24-methylpentacosan-1-ol + 2 NADP(+) + CoA. In terms of biological role, catalyzes the reduction of saturated but not unsaturated C16 or C18 fatty acyl-CoA to fatty alcohols. A lower activity can be observed with shorter fatty acyl-CoA substrates. Can produce very long-chain and ultra long-chain FAls, regardless of whether they have a straight or branched chain. It may play a role in the production of ether lipids/plasmalogens and wax monoesters which synthesis requires fatty alcohols as substrates. The polypeptide is Fatty acyl-CoA reductase 2 (Mus musculus (Mouse)).